Reading from the N-terminus, the 436-residue chain is Peptidase B (436 aa).

Mn(2+) contacts are provided by Lys201 and Asp206. Lys213 is a catalytic residue. Positions 224, 283, and 285 each coordinate Mn(2+). Arg287 is a catalytic residue.

It belongs to the peptidase M17 family. As to quaternary structure, homohexamer. The cofactor is Mn(2+).

It is found in the cytoplasm. It catalyses the reaction Release of an N-terminal amino acid, Xaa, from a peptide or arylamide. Xaa is preferably Glu or Asp but may be other amino acids, including Leu, Met, His, Cys and Gln.. Its function is as follows. Probably plays an important role in intracellular peptide degradation. The sequence is that of Peptidase B from Pectobacterium carotovorum subsp. carotovorum (strain PC1).